Consider the following 382-residue polypeptide: Proton extrusion protein PxcA (382 aa).

4 consecutive transmembrane segments (helical) span residues 162 to 182, 257 to 277, 305 to 325, and 340 to 360; these read VLLL…TYLI, AIKN…VCLM, IILF…SVLL, and FVNL…KYWI.

This sequence belongs to the CemA family.

It localises to the cell inner membrane. In terms of biological role, required for H(+) efflux immediately after light irradiation to form a rapid H(+) concentration gradient across the thylakoid membranes. Together with PxcL, contributes to transient H(+) uptake following dark to light transition. The protein is Proton extrusion protein PxcA of Synechococcus sp. (strain CC9605).